A 201-amino-acid chain; its full sequence is Desiccation-related protein PCC3-06 (201 aa).

The segment covering 41 to 54 (TVASQSQGRQQVSE) has biased composition (polar residues). Disordered stretches follow at residues 41 to 155 (TVAS…QNVK) and 177 to 201 (MGKS…TNYF). 3 stretches are compositionally biased toward basic and acidic residues: residues 57–76 (EDAK…KTSE), 108–144 (GELK…ERVA), and 177–193 (MGKS…ETKK).

This sequence belongs to the LEA type 1 family.

This chain is Desiccation-related protein PCC3-06, found in Craterostigma plantagineum (Blue gem).